Consider the following 465-residue polypeptide: Argininosuccinate lyase (465 aa).

The protein belongs to the lyase 1 family. Argininosuccinate lyase subfamily.

The protein localises to the cytoplasm. The catalysed reaction is 2-(N(omega)-L-arginino)succinate = fumarate + L-arginine. It participates in amino-acid biosynthesis; L-arginine biosynthesis; L-arginine from L-ornithine and carbamoyl phosphate: step 3/3. The chain is Argininosuccinate lyase from Methanosphaera stadtmanae (strain ATCC 43021 / DSM 3091 / JCM 11832 / MCB-3).